The sequence spans 183 residues: ATP synthase subunit delta (183 aa).

This sequence belongs to the ATPase delta chain family. As to quaternary structure, F-type ATPases have 2 components, F(1) - the catalytic core - and F(0) - the membrane proton channel. F(1) has five subunits: alpha(3), beta(3), gamma(1), delta(1), epsilon(1). F(0) has three main subunits: a(1), b(2) and c(10-14). The alpha and beta chains form an alternating ring which encloses part of the gamma chain. F(1) is attached to F(0) by a central stalk formed by the gamma and epsilon chains, while a peripheral stalk is formed by the delta and b chains.

The protein resides in the cell inner membrane. In terms of biological role, f(1)F(0) ATP synthase produces ATP from ADP in the presence of a proton or sodium gradient. F-type ATPases consist of two structural domains, F(1) containing the extramembraneous catalytic core and F(0) containing the membrane proton channel, linked together by a central stalk and a peripheral stalk. During catalysis, ATP synthesis in the catalytic domain of F(1) is coupled via a rotary mechanism of the central stalk subunits to proton translocation. This protein is part of the stalk that links CF(0) to CF(1). It either transmits conformational changes from CF(0) to CF(1) or is implicated in proton conduction. In Desulfovibrio desulfuricans (strain ATCC 27774 / DSM 6949 / MB), this protein is ATP synthase subunit delta.